An 883-amino-acid polypeptide reads, in one-letter code: Glutamate receptor 2 (883 aa).

The signal sequence occupies residues Met-1 to Gly-21. Over Val-22–Ala-543 the chain is Extracellular. An intrachain disulfide couples Cys-78 to Cys-330. Residues Asn-256, Asn-370, Asn-406, and Asn-413 are each glycosylated (N-linked (GlcNAc...) asparagine). Residues Pro-499, Thr-501, and Arg-506 each coordinate L-glutamate. The helical transmembrane segment at Tyr-544–Val-564 threads the bilayer. The Cytoplasmic portion of the chain corresponds to Ser-565–Glu-591. Positions Phe-592–Gln-607 form an intramembrane region, helical; Pore-forming. An intramembrane segment occupies Gln-608 to Cys-610. Cys-610 carries S-palmitoyl cysteine lipidation. Residues Asp-611–Ser-616 lie on the Cytoplasmic side of the membrane. A helical membrane pass occupies residues Leu-617–Tyr-637. Residues Thr-638–Asn-812 lie on the Extracellular side of the membrane. L-glutamate-binding residues include Ser-675 and Thr-676. The residue at position 683 (Ser-683) is a Phosphoserine; by PKC. Ser-717 carries the post-translational modification Phosphoserine; by PKG. Glu-726 is an L-glutamate binding site. A disulfide bridge links Cys-739 with Cys-794. Residues Val-813–Ile-833 form a helical membrane-spanning segment. At Glu-834–Ile-883 the chain is on the cytoplasmic side. The S-palmitoyl cysteine moiety is linked to residue Cys-836. Phosphoserine is present on residues Ser-860 and Ser-863. The interval Ala-867–Gly-877 is required for interaction with IQSEC1. Tyr-876 bears the Phosphotyrosine mark. Position 880 is a phosphoserine (Ser-880).

Belongs to the glutamate-gated ion channel (TC 1.A.10.1) family. GRIA2 subfamily. In terms of assembly, homotetramer or heterotetramer of pore-forming glutamate receptor subunits. Tetramers may be formed by the dimerization of dimers. May interact with MPP4. Forms a ternary complex with GRIP1 and CSPG4. Interacts with ATAD1 in an ATP-dependent manner. ATAD1-catalyzed ATP hydrolysis disrupts binding to ATAD1 and to GRIP1 and leads to AMPAR complex disassembly. Interacts with GRIP2. Interacts with GRIP1. Interacts with NSF via its C-terminus. Interacts with CACNG2, PICK1 and GRIP2. Interacts with GRIA1 and SYNDIG1. Part of a complex containing GRIA2, NSF and NAPA and/or NAPB. Interacts with SNX27 (via PDZ domain); the interaction is required for recycling to the plasma membrane when endocytosed and prevent degradation in lysosomes. Interacts with LRFN1. Found in a complex with GRIA1, GRIA3, GRIA4, CNIH2, CNIH3, CACNG2, CACNG3, CACNG4, CACNG5, CACNG7 and CACNG8. Interacts with CACNG5. Interacts with OLFM2. Interacts with AP4B1, AP4E1 and AP4M1; probably indirect it mediates the somatodendritic localization of GRIA2 in neurons. Forms a complex with GRIP1, NSG1 and STX12; controls the intracellular fate of AMPAR and the endosomal sorting of the GRIA2 subunit toward recycling and membrane targeting. Interacts with IQSEC1; the interaction is required for ARF6 activation. Interacts (heterotetramer form) with CNIH2 and CNIH3; this interaction promotes expression at the plasma membrane and extensively modulates their gating properties by slowing deactivation and desensitization kinetics. Palmitoylated. Depalmitoylated upon L-glutamate stimulation. Cys-610 palmitoylation leads to Golgi retention and decreased cell surface expression. In contrast, Cys-836 palmitoylation does not affect cell surface expression but regulates stimulation-dependent endocytosis. In terms of processing, phosphorylation at Tyr-876 is required for interaction with IQSEC1 and ARF6 activation, which in turn triggers AMPAR internalization for persistent synaptic depression. Post-translationally, ubiquitinated by RNF167, leading to its degradation. N-glycosylated. As to expression, detected in forebrain. Detected in dendrites of neuronal cells. Expressed in the pyramidal cell layers of CA1 and CA3 and in the granule cell layer of the dentate gyrus.

Its subcellular location is the cell membrane. It is found in the postsynaptic cell membrane. The protein localises to the postsynaptic density membrane. The catalysed reaction is Ca(2+)(in) = Ca(2+)(out). It carries out the reaction Na(+)(in) = Na(+)(out). Functionally, ionotropic glutamate receptor that functions as a ligand-gated cation channel, gated by L-glutamate and glutamatergic agonists such as alpha-amino-3-hydroxy-5-methyl-4-isoxazolepropionic acid (AMPA), quisqualic acid, and kainic acid. L-glutamate acts as an excitatory neurotransmitter at many synapses in the central nervous system and plays an important role in fast excitatory synaptic transmission. Binding of the excitatory neurotransmitter L-glutamate induces a conformation change, leading to the opening of the cation channel, and thereby converts the chemical signal to an electrical impulse upon entry of monovalent and divalent cations such as sodium and calcium. The receptor then desensitizes rapidly and enters in a transient inactive state, characterized by the presence of bound agonist. In the presence of CACNG4 or CACNG7 or CACNG8, shows resensitization which is characterized by a delayed accumulation of current flux upon continued application of L-glutamate. Through complex formation with NSG1, GRIP1 and STX12 controls the intracellular fate of AMPAR and the endosomal sorting of the GRIA2 subunit toward recycling and membrane targeting. The polypeptide is Glutamate receptor 2 (Rattus norvegicus (Rat)).